We begin with the raw amino-acid sequence, 642 residues long: MSDRPHTPLLDQVTRPADLKRFSDAQLTQLAGELRAETVSAVSVTGGHLGAGLGVVELTVALHAVFDTPRDKVIWDVGHQCYPHKILTERRDRIRTLRMKDGLSGFTKRSESPYDPFGAAHSSTSISAALGFAVARDLGGVTPEGLGDAIAVIGDGSMSAGMAFEAMNNAGHLKKRLIVILNDNEMSIAPPVGALSNYLSRLYAEEPFQELKAAAKGAVSLLPEPFREGAKRAKEMLKGMAVGGTLFEELGFSYIGPIDGHDMGQLLPVLRTVKARATGPILLHVLTKKGKGYAPAERARDRGHATAKFDVVTGEQKKAPSNAPSYTAVFGKALVDQAARDDKIVAVTAAMPDGTGLNLFAERYPSRCFDVGIAEQHGVTFSAALAAGGLKPFCAMYSTFLQRGYDQVVHDVAIQRLPVRFAIDRAGLVGADGATHAGSFDIAYLANLPGMVVMAAADEAELVHMVATAAAHDDGPIAFRYPRGEGVGVEMPELGKVLEIGKGRMIQKGARVALLSFGTRLTEVQKAAEALAARGITPTIADARFAKPLDRDLILNLAHDHEALITIEEGAVGGFGSHVAQLLADEGVFDHGLKFRSMVLPDIFIDQSSPADMYAVAGMNAPQIEAKVLDVLGIGRIGEKRA.

Residues His-79 and 120 to 122 (AHS) contribute to the thiamine diphosphate site. Position 155 (Asp-155) interacts with Mg(2+). Thiamine diphosphate-binding positions include 156–157 (GS), Asn-184, Tyr-293, and Glu-375. Asn-184 provides a ligand contact to Mg(2+).

Belongs to the transketolase family. DXPS subfamily. As to quaternary structure, homodimer. Mg(2+) serves as cofactor. The cofactor is thiamine diphosphate.

The enzyme catalyses D-glyceraldehyde 3-phosphate + pyruvate + H(+) = 1-deoxy-D-xylulose 5-phosphate + CO2. The protein operates within metabolic intermediate biosynthesis; 1-deoxy-D-xylulose 5-phosphate biosynthesis; 1-deoxy-D-xylulose 5-phosphate from D-glyceraldehyde 3-phosphate and pyruvate: step 1/1. Catalyzes the acyloin condensation reaction between C atoms 2 and 3 of pyruvate and glyceraldehyde 3-phosphate to yield 1-deoxy-D-xylulose-5-phosphate (DXP). The protein is 1-deoxy-D-xylulose-5-phosphate synthase of Ruegeria pomeroyi (strain ATCC 700808 / DSM 15171 / DSS-3) (Silicibacter pomeroyi).